Consider the following 661-residue polypeptide: Pseudouridylate synthase 7 homolog (661 aa).

Met1 carries the post-translational modification N-acetylmethionine. The tract at residues 1 to 97 (MEMTEMTGVS…GLSEECEEEE (97 aa)) is disordered. Ser10 bears the Phosphoserine mark. The segment covering 36 to 52 (SECSLTKGQDGLQNDFL) has biased composition (polar residues). Acidic residues predominate over residues 77 to 97 (QLEDEEEEEEDGLSEECEEEE). Phosphoserine is present on Ser127. Catalysis depends on Asp294, which acts as the Nucleophile. A TRUD domain is found at 370 to 580 (GFINYYGMQR…SGAYRKIIIR (211 aa)). A Phosphothreonine modification is found at Thr610.

This sequence belongs to the pseudouridine synthase TruD family. As to quaternary structure, interacts with SIRT1.

The protein localises to the nucleus. It catalyses the reaction a uridine in tRNA = a pseudouridine in tRNA. It carries out the reaction uridine(13) in tRNA = pseudouridine(13) in tRNA. The enzyme catalyses a uridine in mRNA = a pseudouridine in mRNA. In terms of biological role, pseudouridylate synthase that catalyzes pseudouridylation of RNAs. Acts as a regulator of protein synthesis in embryonic stem cells by mediating pseudouridylation of RNA fragments derived from tRNAs (tRFs): pseudouridylated tRFs inhibit translation by targeting the translation initiation complex. Also catalyzes pseudouridylation of mRNAs: mediates pseudouridylation of mRNAs with the consensus sequence 5'-UGUAG-3'. Acts as a regulator of pre-mRNA splicing by mediating pseudouridylation of pre-mRNAs at locations associated with alternatively spliced regions. Pseudouridylation of pre-mRNAs near splice sites directly regulates mRNA splicing and mRNA 3'-end processing. In addition to mRNAs and tRNAs, binds other types of RNAs, such as snRNAs, Y RNAs and vault RNAs, suggesting that it can catalyze pseudouridylation of many RNA types. In Homo sapiens (Human), this protein is Pseudouridylate synthase 7 homolog.